We begin with the raw amino-acid sequence, 325 residues long: UDP-N-acetylenolpyruvoylglucosamine reductase (325 aa).

Positions 40 to 221 (RTGGLAELFY…RAAMDEVALH (182 aa)) constitute an FAD-binding PCMH-type domain. The active site involves Arg-186. Residue Ser-235 is the Proton donor of the active site. Residue Glu-305 is part of the active site.

It belongs to the MurB family. Requires FAD as cofactor.

Its subcellular location is the cytoplasm. It carries out the reaction UDP-N-acetyl-alpha-D-muramate + NADP(+) = UDP-N-acetyl-3-O-(1-carboxyvinyl)-alpha-D-glucosamine + NADPH + H(+). Its pathway is cell wall biogenesis; peptidoglycan biosynthesis. Its function is as follows. Cell wall formation. This is UDP-N-acetylenolpyruvoylglucosamine reductase from Bartonella henselae (strain ATCC 49882 / DSM 28221 / CCUG 30454 / Houston 1) (Rochalimaea henselae).